Reading from the N-terminus, the 277-residue chain is Pantothenate synthetase (277 aa).

Position 26 to 33 (26 to 33 (MGNLHEGH)) interacts with ATP. His-33 acts as the Proton donor in catalysis. Gln-57 provides a ligand contact to (R)-pantoate. Gln-57 lines the beta-alanine pocket. 144 to 147 (GKKD) provides a ligand contact to ATP. Residue Gln-150 coordinates (R)-pantoate. ATP is bound by residues Gly-173 and 181 to 184 (LSSR).

The protein belongs to the pantothenate synthetase family. Homodimer.

It is found in the cytoplasm. The catalysed reaction is (R)-pantoate + beta-alanine + ATP = (R)-pantothenate + AMP + diphosphate + H(+). It participates in cofactor biosynthesis; (R)-pantothenate biosynthesis; (R)-pantothenate from (R)-pantoate and beta-alanine: step 1/1. Its function is as follows. Catalyzes the condensation of pantoate with beta-alanine in an ATP-dependent reaction via a pantoyl-adenylate intermediate. This chain is Pantothenate synthetase, found in Laribacter hongkongensis (strain HLHK9).